Here is a 557-residue protein sequence, read N- to C-terminus: Arginine--tRNA ligase (557 aa).

The 'HIGH' region motif lies at 128–138 (ANPTGPLHVGH).

The protein belongs to the class-I aminoacyl-tRNA synthetase family. In terms of assembly, monomer.

Its subcellular location is the cytoplasm. The catalysed reaction is tRNA(Arg) + L-arginine + ATP = L-arginyl-tRNA(Arg) + AMP + diphosphate. The polypeptide is Arginine--tRNA ligase (Thiobacillus denitrificans (strain ATCC 25259 / T1)).